A 305-amino-acid chain; its full sequence is Probable alpha-L-glutamate ligase (305 aa).

An ATP-grasp domain is found at 119–301; it reads LQVLAAQHIP…IAGLIIDYLL (183 aa). ATP contacts are provided by residues lysine 155, 192–193, aspartate 201, and 225–227; these read DF and RAN. The Mg(2+) site is built by aspartate 262, glutamate 274, and asparagine 276. 3 residues coordinate Mn(2+): aspartate 262, glutamate 274, and asparagine 276.

Belongs to the RimK family. Mg(2+) is required as a cofactor. Requires Mn(2+) as cofactor.

The protein is Probable alpha-L-glutamate ligase of Haemophilus ducreyi (strain 35000HP / ATCC 700724).